Here is a 195-residue protein sequence, read N- to C-terminus: MGHYSHSDIEEAVKSAKKEGLKDYLYQEPHGKKRSHKKSHRTHKKSRSHKKSYCSHKKSRSHKKSFCSHKKSRSHKKSYCSHKKSRSHKKSYRSHKKSRSYKKSYRSYKKSRSYKKSCRSYKKSRSYKKSYCSHKKKSRSYKKSCRTHKKSYRSHKKYYKKPHHHCDDYKRHDDYDSKKEYWKDGNCWVVKKKYK.

The span at 1–22 (MGHYSHSDIEEAVKSAKKEGLK) shows a compositional bias: basic and acidic residues. Residues 1-163 (MGHYSHSDIE…SHKKYYKKPH (163 aa)) form a disordered region. The segment covering 31–163 (GKKRSHKKSH…SHKKYYKKPH (133 aa)) has biased composition (basic residues). 7 repeat units span residues 36–48 (HKKS…KSRS), 49–61 (HKKS…KSRS), 62–74 (HKKS…KSRS), 75–87 (HKKS…KSRS), 88–100 (HKKS…KSRS), 101–113 (YKKS…KSRS), and 114–126 (YKKS…KSRS). The 9 X 13 AA approximate tandem repeats of [HY]-K-K-S-[HYFC]-[RC]-[TS]-[HY]-K-K-S-R-S stretch occupies residues 36-154 (HKKSHRTHKK…CRTHKKSYRS (119 aa)). Residues 127–140 (YKKSYCSHKKKSRS) form an 8; approximate repeat. One copy of the 9; approximate repeat lies at 141–154 (YKKSCRTHKKSYRS).

Homodimer.

In terms of biological role, may be a morphogenetic protein that is required for the incorporation of protein CotB into the spore coat. This chain is Spore coat protein G (cotG), found in Bacillus subtilis (strain 168).